Here is a 493-residue protein sequence, read N- to C-terminus: MTALNELTLAEARDGLKAKDFSAREIAQAHLDAIDRAKALNAYIVATPDRALKMAEVSDQKIAKGEARPLEGLPLGIKDLFATQGVHTTAGSKILEGFEPHYESNVSSQLWRDGAVMLGKLNLDEFAMGSSNETSAYGKTISPWRRQGSDAPLVPGGSSGGSAAAVAAHLCLGATATDTGGSIRQPAAFTGTVGIKPTYGRCSRWGIIAYASSLDQAGPIARTVQDCAILLGSMAGHDPRDTTSVDMPVPDFEAAISRGVKGLTIGIPKEYRVEGMPAEIQRLWDQGADWLREAGATIKEISLPHTQYALPAYYIVAPAEASSNLARYDGVRYGLRVPGKDIAGMYENTRAAGFGREVKRRIMIGTYVLSAGYYDAYYVRAQKIRTLIKRDFEAAYAAGVDAILTPATPSAAFGIGEMASADPVEMYLNDVFTVTVNMAGLPGISVPAGLDAQGLPLGLQLIGRPFDEETLFAAAQTIENAAGRISLPKAWWA.

Active-site charge relay system residues include K78 and S158. S182 (acyl-ester intermediate) is an active-site residue.

The protein belongs to the amidase family. GatA subfamily. As to quaternary structure, heterotrimer of A, B and C subunits.

The catalysed reaction is L-glutamyl-tRNA(Gln) + L-glutamine + ATP + H2O = L-glutaminyl-tRNA(Gln) + L-glutamate + ADP + phosphate + H(+). In terms of biological role, allows the formation of correctly charged Gln-tRNA(Gln) through the transamidation of misacylated Glu-tRNA(Gln) in organisms which lack glutaminyl-tRNA synthetase. The reaction takes place in the presence of glutamine and ATP through an activated gamma-phospho-Glu-tRNA(Gln). The sequence is that of Glutamyl-tRNA(Gln) amidotransferase subunit A from Methylorubrum extorquens (strain CM4 / NCIMB 13688) (Methylobacterium extorquens).